A 510-amino-acid chain; its full sequence is GPI mannosyltransferase 3 (510 aa).

7 helical membrane-spanning segments follow: residues 17-37 (TVLVVIAAFRVANALTTKTFF), 96-116 (IAPKIVMALFASAGDVYTWKL), 123-143 (PAEAPWALFVSLLSAFNWFFL), 145-163 (RTFSNSAEMVLTAVALNYW), 179-199 (LFIGAISCVLRPTNAILWAVL), 221-241 (VALVFAATYYIDYLYYGEPVF), and 269-289 (YEALPLLTVGWLPLTLWGLWI). A glycan (N-linked (GlcNAc...) asparagine) is linked at N290. 2 helical membrane-spanning segments follow: residues 316 to 336 (FIYPLVPILHMAAAEAITQTP) and 342 to 362 (WLVWSLALVNILVAGYFSQVH).

Belongs to the glycosyltransferase 22 family. PIGB subfamily.

It localises to the endoplasmic reticulum membrane. It functions in the pathway glycolipid biosynthesis; glycosylphosphatidylinositol-anchor biosynthesis. Mannosyltransferase involved in glycosylphosphatidylinositol-anchor biosynthesis. Transfers the third mannose to Man2-GlcN-acyl-PI during GPI precursor assembly. The polypeptide is GPI mannosyltransferase 3 (GPI10) (Yarrowia lipolytica (strain CLIB 122 / E 150) (Yeast)).